Here is an 83-residue protein sequence, read N- to C-terminus: Exodeoxyribonuclease 7 small subunit (83 aa).

The protein belongs to the XseB family. Heterooligomer composed of large and small subunits.

It localises to the cytoplasm. It carries out the reaction Exonucleolytic cleavage in either 5'- to 3'- or 3'- to 5'-direction to yield nucleoside 5'-phosphates.. Functionally, bidirectionally degrades single-stranded DNA into large acid-insoluble oligonucleotides, which are then degraded further into small acid-soluble oligonucleotides. The sequence is that of Exodeoxyribonuclease 7 small subunit from Rhodopseudomonas palustris (strain BisB5).